A 177-amino-acid polypeptide reads, in one-letter code: Ribulose bisphosphate carboxylase small subunit, chloroplastic 5 (177 aa).

The transit peptide at 1–56 (MASSMMASTAAVARAGPAQSSMVAPFNGLRSSVAFPATRKANNDLSTLPSNGGRVS) directs the protein to the chloroplast.

This sequence belongs to the RuBisCO small chain family. Heterohexadecamer of 8 large and 8 small subunits.

Its subcellular location is the plastid. It localises to the chloroplast. Its function is as follows. RuBisCO catalyzes two reactions: the carboxylation of D-ribulose 1,5-bisphosphate, the primary event in carbon dioxide fixation, as well as the oxidative fragmentation of the pentose substrate. Both reactions occur simultaneously and in competition at the same active site. Although the small subunit is not catalytic it is essential for maximal activity. This chain is Ribulose bisphosphate carboxylase small subunit, chloroplastic 5, found in Lemna gibba (Swollen duckweed).